A 465-amino-acid polypeptide reads, in one-letter code: Kynureninase (465 aa).

Pyridoxal 5'-phosphate-binding positions include Leu133, Thr134, 161-164 (FPSD), Ser217, Asp246, His249, and Tyr271. An N6-(pyridoxal phosphate)lysine modification is found at Lys272. The pyridoxal 5'-phosphate site is built by Trp302 and Asn330.

Belongs to the kynureninase family. In terms of assembly, homodimer. Requires pyridoxal 5'-phosphate as cofactor.

The protein localises to the cytoplasm. The catalysed reaction is L-kynurenine + H2O = anthranilate + L-alanine + H(+). It catalyses the reaction 3-hydroxy-L-kynurenine + H2O = 3-hydroxyanthranilate + L-alanine + H(+). Its pathway is amino-acid degradation; L-kynurenine degradation; L-alanine and anthranilate from L-kynurenine: step 1/1. The protein operates within cofactor biosynthesis; NAD(+) biosynthesis; quinolinate from L-kynurenine: step 2/3. Catalyzes the cleavage of L-kynurenine (L-Kyn) and L-3-hydroxykynurenine (L-3OHKyn) into anthranilic acid (AA) and 3-hydroxyanthranilic acid (3-OHAA), respectively. This chain is Kynureninase, found in Nematostella vectensis (Starlet sea anemone).